The primary structure comprises 213 residues: MRSNYIVIEGLEGAGKTTARNVVVETLEQLGIREMIFTREPGGTQLAEKLRSLVLDIKSVGDEVITEKAEVLMFYAARVQLVETVIKPALAKGTWVIGDRHDLSTQAYQGGGRGVDQTMLATLRDAVLGDFRPDLTLYLDVTPEVGLKRARARGELDRIEQESFDFFNRTRARYLELAAQDASIRTIDATQSLECVMADIRQTVTTWVKEQGA.

Position 10 to 17 (G10 to T17) interacts with ATP.

The protein belongs to the thymidylate kinase family.

It carries out the reaction dTMP + ATP = dTDP + ADP. Its function is as follows. Phosphorylation of dTMP to form dTDP in both de novo and salvage pathways of dTTP synthesis. This Escherichia fergusonii (strain ATCC 35469 / DSM 13698 / CCUG 18766 / IAM 14443 / JCM 21226 / LMG 7866 / NBRC 102419 / NCTC 12128 / CDC 0568-73) protein is Thymidylate kinase.